Here is a 160-residue protein sequence, read N- to C-terminus: Protein MGF 300-2R (160 aa).

This sequence belongs to the asfivirus MGF 300 family.

In terms of biological role, plays a role in virus cell tropism, and may be required for efficient virus replication in macrophages. This is Protein MGF 300-2R from African swine fever virus (isolate Tick/South Africa/Pretoriuskop Pr4/1996) (ASFV).